A 481-amino-acid polypeptide reads, in one-letter code: Glutamate--tRNA ligase (481 aa).

The short motif at 11–21 (PSPTGLLHIGN) is the 'HIGH' region element. The 'KMSKS' region motif lies at 255–259 (KLSKR). K258 is a binding site for ATP.

This sequence belongs to the class-I aminoacyl-tRNA synthetase family. Glutamate--tRNA ligase type 1 subfamily. Monomer.

The protein localises to the cytoplasm. The enzyme catalyses tRNA(Glu) + L-glutamate + ATP = L-glutamyl-tRNA(Glu) + AMP + diphosphate. Its function is as follows. Catalyzes the attachment of glutamate to tRNA(Glu) in a two-step reaction: glutamate is first activated by ATP to form Glu-AMP and then transferred to the acceptor end of tRNA(Glu). This chain is Glutamate--tRNA ligase, found in Streptococcus pyogenes serotype M6 (strain ATCC BAA-946 / MGAS10394).